Here is a 221-residue protein sequence, read N- to C-terminus: Cysteine protease inhibitor 8 (221 aa).

The signal sequence occupies residues 1–26 (IPSINILSFLLLSSTLSLVAFARSFT). A propeptide spanning residues 27-42 (SENPIVLPTTCHDDDN) is cleaved from the precursor. The Vacuolar targeting signal signature appears at 29–34 (NPIVLP). Intrachain disulfides connect cysteine 84–cysteine 136 and cysteine 184–cysteine 190.

It belongs to the protease inhibitor I3 (leguminous Kunitz-type inhibitor) family.

The protein localises to the vacuole. Inhibitor of cysteine proteases. May protect the plant by inhibiting proteases of invading organisms. This Solanum tuberosum (Potato) protein is Cysteine protease inhibitor 8.